A 248-amino-acid polypeptide reads, in one-letter code: ATP synthase subunit a, chloroplastic (248 aa).

The next 5 helical transmembrane spans lie at 35 to 55 (GQVFIVSWLVIAALLTISFLG), 94 to 114 (VPYIATLFLFILGCNWAGALI), 133 to 153 (INTTVALSLLTSLAYFYAGLS), 202 to 222 (VFTLLIPILIPLPVMILGLFA), and 224 to 244 (SIQALIFSTLSAAYIGEAMEG).

It belongs to the ATPase A chain family. As to quaternary structure, F-type ATPases have 2 components, CF(1) - the catalytic core - and CF(0) - the membrane proton channel. CF(1) has five subunits: alpha(3), beta(3), gamma(1), delta(1), epsilon(1). CF(0) has four main subunits: a, b, b' and c.

The protein localises to the plastid. It is found in the chloroplast thylakoid membrane. In terms of biological role, key component of the proton channel; it plays a direct role in the translocation of protons across the membrane. The sequence is that of ATP synthase subunit a, chloroplastic from Porphyra purpurea (Red seaweed).